A 670-amino-acid chain; its full sequence is Transcription factor 4 (670 aa).

Residues 1-83 (MHHQQRMAAL…GTPYDHMTSR (83 aa)) are essential for MYOD1 inhibition. Disordered stretches follow at residues 24–244 (AMFS…LGNS), 262–320 (LSYP…SQTG), 335–378 (HTNN…EGPL), 406–426 (PSTA…PSHN), 465–573 (SLLP…MANN), and 637–670 (KRRE…MGQM). A compositionally biased stretch (polar residues) spans 29-49 (PVSSGKNGPTSLASGHFTGSN). Serine 66, serine 87, and serine 92 each carry phosphoserine. Composition is skewed to polar residues over residues 107-125 (GSYS…QQSL), 136-154 (GTLS…SSNN), 205-215 (PAASTFPSSFF), and 265-305 (PSHS…TDSI). Positions 336–347 (TNNSFSSNPSTP) are enriched in low complexity. A compositionally biased stretch (polar residues) spans 364 to 373 (NGGQASSSPN). The residue at position 371 (serine 371) is a Phosphoserine. The interval 378 to 399 (LHSLQSRIEDRLERLDDAIHVL) is leucine-zipper. Low complexity-rich tracts occupy residues 466–479 (LLPN…LPVQ) and 502–511 (GQSVSSGSSE). At serine 514 the chain carries Phosphoserine. Basic and acidic residues-rich tracts occupy residues 526–542 (KSSE…DIKS) and 558–573 (PEQK…MANN). In terms of domain architecture, bHLH spans 567–620 (ERRMANNARERLRVRDINEAFKELGRMVQLHLKSDKPQTKLLILHQAVAVILSL). The segment at 622–645 (QQVRERNLNPKAACLKRREEEKVS) is class A specific domain.

Efficient DNA binding requires dimerization with another bHLH protein. Isoform 2 seems to form inactive heterodimers with MYOD1. Interacts with HIVEP2. Interacts with NEUROD2. Interacts with AGBL1. Interacts with BHLHA9. In terms of tissue distribution, expressed in the cerebral cortex, Purkinje and granule cell layers of the cerebellum, olfactory neuroepithelium, pyramidal cells of hippocampal layers CA1-CA4, and in the granular cells of the dentate gyrus.

It localises to the nucleus. Its function is as follows. Transcription factor that binds to the immunoglobulin enhancer Mu-E5/KE5-motif. Involved in the initiation of neuronal differentiation. Activates transcription by binding to the E box (5'-CANNTG-3'). Isoform 2 inhibits MYOD1 activation of the cardiac alpha-actin promoter. Binds to the E-box present in the somatostatin receptor 2 initiator element (SSTR2-INR) to activate transcription. May have a regulatory function in developmental processes as well as during neuronal plasticity. This chain is Transcription factor 4 (Tcf4), found in Mus musculus (Mouse).